The sequence spans 880 residues: Calcium-transporting ATPase lmo0841 (880 aa).

The next 4 membrane-spanning stretches (helical) occupy residues 47-67 (LWKL…VIAA), 68-88 (LVQL…VLIV), 243-263 (LGLG…GRVL), and 271-291 (MATA…AAIP). Ca(2+) is bound by residues Val287, Ala288, Ile290, and Glu292. Catalysis depends on Asp334, which acts as the 4-aspartylphosphate intermediate. 5 helical membrane-spanning segments follow: residues 681–701 (IAYL…ALVL), 707–727 (FTAL…AIAL), 756–776 (AVIS…YIGM), 819–839 (YVIG…LPGA), and 854–874 (WSIA…IKVV). Ca(2+) is bound by residues Asn716 and Asp720.

Belongs to the cation transport ATPase (P-type) (TC 3.A.3) family. Type IIA subfamily.

The protein localises to the cell membrane. The catalysed reaction is Ca(2+)(in) + ATP + H2O = Ca(2+)(out) + ADP + phosphate + H(+). Phosphorylation is inhibited by EGTA and vanadate. ATPase activity is stimulated by Sr(2+). Inhibited by very high concentrations of cyclopiazonic acid (CPA). Its function is as follows. Catalyzes the hydrolysis of ATP coupled with the transport of calcium. The transport is electrogenic with a probable ATP:Ca(2+):H(+) stoichiometry of 1:1:1. May have an important role in survival of the bacterium when stressed by a combination of a high calcium concentration and alkaline pH. This is Calcium-transporting ATPase lmo0841 from Listeria monocytogenes serovar 1/2a (strain ATCC BAA-679 / EGD-e).